Consider the following 630-residue polypeptide: Phosphomethylpyrimidine synthase (630 aa).

Disordered stretches follow at residues 1 to 22 (MADI…TTGP) and 97 to 120 (AQRE…VPAF). Residues Asn224, Met253, Tyr282, His318, 338–340 (SRG), 379–382 (DGLR), and Glu418 contribute to the substrate site. His422 is a binding site for Zn(2+). Tyr445 lines the substrate pocket. A Zn(2+)-binding site is contributed by His486. 3 residues coordinate [4Fe-4S] cluster: Cys566, Cys569, and Cys574.

This sequence belongs to the ThiC family. As to quaternary structure, homodimer. It depends on [4Fe-4S] cluster as a cofactor.

The catalysed reaction is 5-amino-1-(5-phospho-beta-D-ribosyl)imidazole + S-adenosyl-L-methionine = 4-amino-2-methyl-5-(phosphooxymethyl)pyrimidine + CO + 5'-deoxyadenosine + formate + L-methionine + 3 H(+). It participates in cofactor biosynthesis; thiamine diphosphate biosynthesis. In terms of biological role, catalyzes the synthesis of the hydroxymethylpyrimidine phosphate (HMP-P) moiety of thiamine from aminoimidazole ribotide (AIR) in a radical S-adenosyl-L-methionine (SAM)-dependent reaction. In Sphingopyxis alaskensis (strain DSM 13593 / LMG 18877 / RB2256) (Sphingomonas alaskensis), this protein is Phosphomethylpyrimidine synthase.